Reading from the N-terminus, the 144-residue chain is uncharacterized protein (144 aa).

This is an uncharacterized protein from Bacillus subtilis (strain 168).